The primary structure comprises 927 residues: Ribosome-releasing factor 2, mitochondrial (927 aa).

The transit peptide at M1–T57 directs the protein to the mitochondrion. Positions E64–S379 constitute a tr-type G domain. GTP contacts are provided by residues A73 to T80, D163 to H167, and N217 to D220.

It belongs to the TRAFAC class translation factor GTPase superfamily. Classic translation factor GTPase family. EF-G/EF-2 subfamily.

It is found in the mitochondrion. Its function is as follows. Mitochondrial GTPase that mediates the disassembly of ribosomes from messenger RNA at the termination of mitochondrial protein biosynthesis. Not involved in the GTP-dependent ribosomal translocation step during translation elongation. The polypeptide is Ribosome-releasing factor 2, mitochondrial (mef2) (Talaromyces marneffei (strain ATCC 18224 / CBS 334.59 / QM 7333) (Penicillium marneffei)).